The primary structure comprises 20 residues: Cytochrome c oxidase subunit 6A2, mitochondrial (20 aa).

A disordered region spans residues 1 to 20 (ASGAKGDHGGAGASTXXLLT).

This sequence belongs to the cytochrome c oxidase subunit 6A family. In terms of assembly, component of the cytochrome c oxidase (complex IV, CIV), a multisubunit enzyme composed of 14 subunits. The complex is composed of a catalytic core of 3 subunits MT-CO1, MT-CO2 and MT-CO3, encoded in the mitochondrial DNA, and 11 supernumerary subunits COX4I, COX5A, COX5B, COX6A, COX6B, COX6C, COX7A, COX7B, COX7C, COX8 and NDUFA4, which are encoded in the nuclear genome. The complex exists as a monomer or a dimer and forms supercomplexes (SCs) in the inner mitochondrial membrane with NADH-ubiquinone oxidoreductase (complex I, CI) and ubiquinol-cytochrome c oxidoreductase (cytochrome b-c1 complex, complex III, CIII), resulting in different assemblies (supercomplex SCI(1)III(2)IV(1) and megacomplex MCI(2)III(2)IV(2)). As to expression, heart specific isoform.

The protein resides in the mitochondrion inner membrane. It participates in energy metabolism; oxidative phosphorylation. Component of the cytochrome c oxidase, the last enzyme in the mitochondrial electron transport chain which drives oxidative phosphorylation. The respiratory chain contains 3 multisubunit complexes succinate dehydrogenase (complex II, CII), ubiquinol-cytochrome c oxidoreductase (cytochrome b-c1 complex, complex III, CIII) and cytochrome c oxidase (complex IV, CIV), that cooperate to transfer electrons derived from NADH and succinate to molecular oxygen, creating an electrochemical gradient over the inner membrane that drives transmembrane transport and the ATP synthase. Cytochrome c oxidase is the component of the respiratory chain that catalyzes the reduction of oxygen to water. Electrons originating from reduced cytochrome c in the intermembrane space (IMS) are transferred via the dinuclear copper A center (CU(A)) of subunit 2 and heme A of subunit 1 to the active site in subunit 1, a binuclear center (BNC) formed by heme A3 and copper B (CU(B)). The BNC reduces molecular oxygen to 2 water molecules unsing 4 electrons from cytochrome c in the IMS and 4 protons from the mitochondrial matrix. Plays a role in the assembly and stabilization of complex IV. The sequence is that of Cytochrome c oxidase subunit 6A2, mitochondrial (COX6A2) from Canis lupus familiaris (Dog).